A 148-amino-acid polypeptide reads, in one-letter code: uncharacterized protein (148 aa).

Residues 97-112 (KKLDEQRMPGKPKNTE) are compositionally biased toward basic and acidic residues. The interval 97–126 (KKLDEQRMPGKPKNTEGSKSTIRKKANVGN) is disordered.

This is an uncharacterized protein from Caenorhabditis elegans.